A 152-amino-acid chain; its full sequence is Ribosome maturation factor RimP (152 aa).

Belongs to the RimP family.

It localises to the cytoplasm. In terms of biological role, required for maturation of 30S ribosomal subunits. This is Ribosome maturation factor RimP from Burkholderia ambifaria (strain MC40-6).